We begin with the raw amino-acid sequence, 302 residues long: 4-hydroxy-tetrahydrodipicolinate synthase (302 aa).

Thr57 contacts pyruvate. Tyr145 (proton donor/acceptor) is an active-site residue. The active-site Schiff-base intermediate with substrate is the Lys173. Residue Ile213 participates in pyruvate binding.

The protein belongs to the DapA family. As to quaternary structure, homotetramer; dimer of dimers.

Its subcellular location is the cytoplasm. The enzyme catalyses L-aspartate 4-semialdehyde + pyruvate = (2S,4S)-4-hydroxy-2,3,4,5-tetrahydrodipicolinate + H2O + H(+). It functions in the pathway amino-acid biosynthesis; L-lysine biosynthesis via DAP pathway; (S)-tetrahydrodipicolinate from L-aspartate: step 3/4. Its function is as follows. Catalyzes the condensation of (S)-aspartate-beta-semialdehyde [(S)-ASA] and pyruvate to 4-hydroxy-tetrahydrodipicolinate (HTPA). The sequence is that of 4-hydroxy-tetrahydrodipicolinate synthase from Mycolicibacterium gilvum (strain PYR-GCK) (Mycobacterium gilvum (strain PYR-GCK)).